We begin with the raw amino-acid sequence, 146 residues long: 3-dehydroquinate dehydratase (146 aa).

Tyr-23 (proton acceptor) is an active-site residue. The substrate site is built by Asn-74, His-80, and Asp-87. His-100 functions as the Proton donor in the catalytic mechanism. Residues 101-102 (IS) and Arg-111 contribute to the substrate site.

The protein belongs to the type-II 3-dehydroquinase family. Homododecamer.

The enzyme catalyses 3-dehydroquinate = 3-dehydroshikimate + H2O. The protein operates within metabolic intermediate biosynthesis; chorismate biosynthesis; chorismate from D-erythrose 4-phosphate and phosphoenolpyruvate: step 3/7. Its function is as follows. Catalyzes a trans-dehydration via an enolate intermediate. The protein is 3-dehydroquinate dehydratase of Bacillus mycoides (strain KBAB4) (Bacillus weihenstephanensis).